Reading from the N-terminus, the 6733-residue chain is Replicase polyprotein 1ab (6733 aa).

In terms of domain architecture, Macro spans 1633-1814 (FNQYYEFKVG…QYIEALGVVE (182 aa)). The interval 2183-2565 (LTHVNKFKIV…IMLPVFVIIL (383 aa)) is HD1. Helical transmembrane passes span 2191-2211 (IVVY…DFSL), 2219-2239 (VFLL…LGLV), 2266-2286 (GVHW…DFFV), 2411-2431 (ALWF…PLMF), 2521-2541 (VAVS…IVVL), 2546-2566 (FVWF…IILF), 2769-2789 (VMLI…FMVG), 2937-2957 (IISP…FLFL), 2986-3006 (VLFV…LALW), and 3022-3042 (LFIL…GFVF). An HD2 region spans residues 2769-3042 (VMLIIALGAI…FVLIVGGFVF (274 aa)). Catalysis depends on charge relay system; for 3C-like serine proteinase activity residues His-3184, Glu-3222, and Ser-3291. The next 7 membrane-spanning stretches (helical) occupy residues 3422-3442 (SNVS…FLVC), 3456-3478 (VVLP…VLFW), 3486-3506 (LAVT…LGLF), 3514-3534 (VGLI…VVVN), 3538-3558 (AIFV…LGVV), 3573-3593 (AVFA…LILF), and 3598-3613 (LMSF…FRVF). The HD3 stretch occupies residues 3430-3613 (NLHFIFSVYF…VVIVLSFRVF (184 aa)). Residues 4442 to 4673 (DFKLLRDVWC…AKEMNVPADF (232 aa)) form the NiRAN domain. The 152-residue stretch at 4981–5132 (FDVFGSDYTK…FSKPGALKIF (152 aa)) folds into the RdRp catalytic domain. Residues 5289–5404 (FDRVCFCCPN…NGVAQLLTPV (116 aa)) form the CV ZBD domain. Zn(2+)-binding residues include Cys-5293, Cys-5296, Cys-5304, Cys-5307, Cys-5314, Cys-5317, His-5321, His-5327, Cys-5336, Cys-5338, Cys-5359, and Cys-5362. Residues 5509-5688 (NQPWRLATCF…LQLATQKRYL (180 aa)) enclose the (+)RNA virus helicase ATP-binding domain. Residues 5689–5848 (TACYRCPPQI…FGMEKQSDFN (160 aa)) form the (+)RNA virus helicase C-terminal domain. The region spanning 5846 to 6059 (DFNIIPEVAS…YLASYDAAFK (214 aa)) is the ExoN domain. Catalysis depends on residues Asp-5860, Glu-5862, and Asp-5961. The Zn(2+) site is built by His-6025, Cys-6029, and His-6033. Active-site residues include His-6037 and Asp-6042. Cys-6048 contributes to the Zn(2+) binding site. A NendoU domain is found at 6327–6467 (LPETLFSTGR…GEDDIQTFYP (141 aa)). Residues His-6363, His-6380, Lys-6412, Lys-6509, Asp-6585, Lys-6613, and Glu-6647 contribute to the active site. The Nidovirus-type SAM-dependent 2'-O-MTase domain maps to 6469–6733 (KEFIRSYYEW…EVPLLCQMKH (265 aa)).

In terms of processing, specific enzymatic cleavages in vivo by its own protease yield mature proteins. 3CL-PRO is autocatalytically processed.

The protein localises to the host membrane. The enzyme catalyses RNA(n) + a ribonucleoside 5'-triphosphate = RNA(n+1) + diphosphate. It catalyses the reaction ATP + H2O = ADP + phosphate + H(+). In terms of biological role, the 3C-like serine proteinase is responsible for the majority of cleavages. The helicase which contains a zinc finger structure displays RNA and DNA duplex-unwinding activities with 5' to 3' polarity. Functionally, acts on both ssRNA and dsRNA in a 3' to 5' direction. Its function is as follows. NendoU is a Mn(2+)-dependent, uridylate-specific enzyme, which leaves 2'-3'-cyclic phosphates 5' to the cleaved bond. The chain is Replicase polyprotein 1ab (rep) from Bos taurus (Bovine).